Reading from the N-terminus, the 117-residue chain is DNA-binding protein VNG_2008H (117 aa).

Positions 1–59 (MSGNPDDDRLEELRQRKKEQLKQQQQGGDAEREAQQQQAQQAEQQKQAMLKQNLTDGAR) are disordered. Positions 11-21 (EELRQRKKEQL) are enriched in basic and acidic residues. The segment covering 35 to 48 (QQQQAQQAEQQKQA) has biased composition (low complexity).

The protein belongs to the PDCD5 family.

This is DNA-binding protein VNG_2008H from Halobacterium salinarum (strain ATCC 700922 / JCM 11081 / NRC-1) (Halobacterium halobium).